The sequence spans 620 residues: 1-deoxy-D-xylulose-5-phosphate synthase (620 aa).

Thiamine diphosphate contacts are provided by residues H80 and 121 to 123 (GHS). D152 contributes to the Mg(2+) binding site. Thiamine diphosphate is bound by residues 153–154 (GA), N181, Y288, and E370. N181 contributes to the Mg(2+) binding site.

This sequence belongs to the transketolase family. DXPS subfamily. Homodimer. Mg(2+) is required as a cofactor. It depends on thiamine diphosphate as a cofactor.

The enzyme catalyses D-glyceraldehyde 3-phosphate + pyruvate + H(+) = 1-deoxy-D-xylulose 5-phosphate + CO2. The protein operates within metabolic intermediate biosynthesis; 1-deoxy-D-xylulose 5-phosphate biosynthesis; 1-deoxy-D-xylulose 5-phosphate from D-glyceraldehyde 3-phosphate and pyruvate: step 1/1. Catalyzes the acyloin condensation reaction between C atoms 2 and 3 of pyruvate and glyceraldehyde 3-phosphate to yield 1-deoxy-D-xylulose-5-phosphate (DXP). The polypeptide is 1-deoxy-D-xylulose-5-phosphate synthase (Escherichia coli O139:H28 (strain E24377A / ETEC)).